The sequence spans 287 residues: Fructose-bisphosphate aldolase (287 aa).

Ser50 contributes to the D-glyceraldehyde 3-phosphate binding site. Catalysis depends on Asp85, which acts as the Proton donor. Zn(2+)-binding residues include His86, Asp107, Glu137, and His181. Gly182 is a binding site for dihydroxyacetone phosphate. Residue His209 coordinates Zn(2+). Dihydroxyacetone phosphate-binding positions include 210 to 212 (GGT) and 231 to 234 (NVNT). Phosphothreonine is present on residues Thr212 and Thr234.

It belongs to the class II fructose-bisphosphate aldolase family. Requires Zn(2+) as cofactor.

The enzyme catalyses beta-D-fructose 1,6-bisphosphate = D-glyceraldehyde 3-phosphate + dihydroxyacetone phosphate. It functions in the pathway carbohydrate degradation; glycolysis; D-glyceraldehyde 3-phosphate and glycerone phosphate from D-glucose: step 4/4. In terms of biological role, catalyzes the aldol condensation of dihydroxyacetone phosphate (DHAP or glycerone-phosphate) with glyceraldehyde 3-phosphate (G3P) to form fructose 1,6-bisphosphate (FBP) in gluconeogenesis and the reverse reaction in glycolysis. This Geobacillus stearothermophilus (Bacillus stearothermophilus) protein is Fructose-bisphosphate aldolase (fba).